Reading from the N-terminus, the 247-residue chain is Proteasome subunit alpha type-7-B (247 aa).

It belongs to the peptidase T1A family. As to quaternary structure, the 26S proteasome consists of a 20S proteasome core and two 19S regulatory subunits. The 20S proteasome core is composed of 28 subunits that are arranged in four stacked rings, resulting in a barrel-shaped structure. The two end rings are each formed by seven alpha subunits, and the two central rings are each formed by seven beta subunits. The catalytic chamber with the active sites is on the inside of the barrel. Phosphorylated in G2 phase.

The protein resides in the cytoplasm. It localises to the nucleus. In terms of biological role, the proteasome is a multicatalytic proteinase complex which is characterized by its ability to cleave peptides with Arg, Phe, Tyr, Leu, and Glu adjacent to the leaving group at neutral or slightly basic pH. The proteasome has an ATP-dependent proteolytic activity. The chain is Proteasome subunit alpha type-7-B (psma7-b) from Xenopus laevis (African clawed frog).